The sequence spans 183 residues: Guanylate kinase (183 aa).

A Guanylate kinase-like domain is found at 4–182; sequence GRVVVLTGPS…AITALEAAIF (179 aa). ATP is bound at residue 11 to 18; it reads GPSGVGKG.

The protein belongs to the guanylate kinase family.

Its subcellular location is the cytoplasm. It catalyses the reaction GMP + ATP = GDP + ADP. It carries out the reaction dZMP + ATP = dZDP + ADP. It functions in the pathway purine metabolism. Its function is as follows. Essential for recycling GMP and indirectly, cGMP. In terms of biological role, (Microbial infection) Catalyzes the phosphorylation of dZMP to dZDP, when the bacterium is infected by a phage that produces the substrate for the synthesis of dZTP (2- amino-2'-deoxyadenosine 5'-triphosphate), which is then used by the phage as a DNA polymerase substrate. In Synechococcus elongatus (strain ATCC 33912 / PCC 7942 / FACHB-805) (Anacystis nidulans R2), this protein is Guanylate kinase.